The chain runs to 492 residues: Ketol-acid reductoisomerase (NADP(+)) (492 aa).

The region spanning 15–208 (AQLGKCRFMA…GGHRAGVLES (194 aa)) is the KARI N-terminal Rossmann domain. NADP(+) is bound by residues 45 to 48 (CGAQ), R68, R76, S78, and 108 to 110 (DKQ). H132 is a catalytic residue. An NADP(+)-binding site is contributed by G158. KARI C-terminal knotted domains lie at 209 to 344 (SFVA…NAPQ) and 345 to 485 (FEGK…MTDM). Mg(2+) is bound by residues D217, E221, E389, and E393. S414 is a substrate binding site.

The protein belongs to the ketol-acid reductoisomerase family. Mg(2+) is required as a cofactor.

It catalyses the reaction (2R)-2,3-dihydroxy-3-methylbutanoate + NADP(+) = (2S)-2-acetolactate + NADPH + H(+). It carries out the reaction (2R,3R)-2,3-dihydroxy-3-methylpentanoate + NADP(+) = (S)-2-ethyl-2-hydroxy-3-oxobutanoate + NADPH + H(+). It functions in the pathway amino-acid biosynthesis; L-isoleucine biosynthesis; L-isoleucine from 2-oxobutanoate: step 2/4. The protein operates within amino-acid biosynthesis; L-valine biosynthesis; L-valine from pyruvate: step 2/4. In terms of biological role, involved in the biosynthesis of branched-chain amino acids (BCAA). Catalyzes an alkyl-migration followed by a ketol-acid reduction of (S)-2-acetolactate (S2AL) to yield (R)-2,3-dihydroxy-isovalerate. In the isomerase reaction, S2AL is rearranged via a Mg-dependent methyl migration to produce 3-hydroxy-3-methyl-2-ketobutyrate (HMKB). In the reductase reaction, this 2-ketoacid undergoes a metal-dependent reduction by NADPH to yield (R)-2,3-dihydroxy-isovalerate. The protein is Ketol-acid reductoisomerase (NADP(+)) of Yersinia pseudotuberculosis serotype O:3 (strain YPIII).